Reading from the N-terminus, the 123-residue chain is ATP synthase epsilon chain (123 aa).

This sequence belongs to the ATPase epsilon chain family. In terms of assembly, F-type ATPases have 2 components, CF(1) - the catalytic core - and CF(0) - the membrane proton channel. CF(1) has five subunits: alpha(3), beta(3), gamma(1), delta(1), epsilon(1). CF(0) has three main subunits: a, b and c.

The protein resides in the cell membrane. Functionally, produces ATP from ADP in the presence of a proton gradient across the membrane. The chain is ATP synthase epsilon chain from Corynebacterium diphtheriae (strain ATCC 700971 / NCTC 13129 / Biotype gravis).